The sequence spans 464 residues: Glutathione reductase (464 aa).

FAD contacts are provided by S17 and G18. S17 lines the glutathione pocket. R24 lines the glutathione pocket. Residues E37, T45, C46, and K54 each contribute to the FAD site. C46 and C51 form a disulfide bridge. Y103 provides a ligand contact to glutathione. Position 119 (A119) interacts with FAD. Residues A186, I189, E192, R209, R215, and G274 each coordinate NADP(+). Position 315 (D315) interacts with FAD. E321 is an NADP(+) binding site. Residue T323 participates in FAD binding. Residue R331 participates in glutathione binding. Residue V354 coordinates NADP(+). H453 provides a ligand contact to FAD. H453 functions as the Proton acceptor in the catalytic mechanism.

Belongs to the class-I pyridine nucleotide-disulfide oxidoreductase family. In terms of assembly, homodimer. FAD serves as cofactor.

The protein localises to the cytoplasm. It localises to the mitochondrion. The enzyme catalyses 2 glutathione + NADP(+) = glutathione disulfide + NADPH + H(+). Its function is as follows. Catalyzes the reduction of glutathione disulfide (GSSG) to reduced glutathione (GSH). Constitutes the major mechanism to maintain a high GSH:GSSG ratio in the cytosol. This Schizosaccharomyces pombe (strain 972 / ATCC 24843) (Fission yeast) protein is Glutathione reductase (pgr1).